Consider the following 393-residue polypeptide: Uroporphyrinogen decarboxylase, chloroplastic (393 aa).

The disordered stretch occupies residues 1–64 (MATACPPLSL…AGERNQREEV (64 aa)). The segment covering 23–37 (AGPNAGSSRPSAAAP) has biased composition (low complexity). The segment covering 38-50 (SERRSWRRPRPDG) has biased composition (basic and acidic residues). Substrate contacts are provided by residues 73–77 (RQAGR), Phe-92, Ser-122, Asp-123, Tyr-200, Ser-255, and His-370.

Belongs to the uroporphyrinogen decarboxylase family. In terms of assembly, homodimer.

It localises to the plastid. It is found in the chloroplast. The enzyme catalyses uroporphyrinogen III + 4 H(+) = coproporphyrinogen III + 4 CO2. It participates in porphyrin-containing compound metabolism; protoporphyrin-IX biosynthesis; coproporphyrinogen-III from 5-aminolevulinate: step 4/4. Functionally, catalyzes the decarboxylation of four acetate groups of uroporphyrinogen-III to yield coproporphyrinogen-III. This Zea mays (Maize) protein is Uroporphyrinogen decarboxylase, chloroplastic (LES22).